The chain runs to 235 residues: Triosephosphate isomerase (235 aa).

7 to 9 (NFK) provides a ligand contact to substrate. H92 (electrophile) is an active-site residue. Residue E161 is the Proton acceptor of the active site. Substrate is bound by residues G167 and S197.

The protein belongs to the triosephosphate isomerase family. In terms of assembly, homodimer.

The protein localises to the cytoplasm. The catalysed reaction is D-glyceraldehyde 3-phosphate = dihydroxyacetone phosphate. It functions in the pathway carbohydrate biosynthesis; gluconeogenesis. The protein operates within carbohydrate degradation; glycolysis; D-glyceraldehyde 3-phosphate from glycerone phosphate: step 1/1. Functionally, involved in the gluconeogenesis. Catalyzes stereospecifically the conversion of dihydroxyacetone phosphate (DHAP) to D-glyceraldehyde-3-phosphate (G3P). The sequence is that of Triosephosphate isomerase from Helicobacter hepaticus (strain ATCC 51449 / 3B1).